Reading from the N-terminus, the 693-residue chain is Polyribonucleotide nucleotidyltransferase (693 aa).

Mg(2+) contacts are provided by aspartate 489 and aspartate 495. The KH domain occupies 556–615; the sequence is PQIHVMNINPAKIKDVVGRGGATVKGIVEKTGAQIDTSDSGEVKVFAKDKKSMDMAVAMI. Residues 625–693 form the S1 motif domain; that stretch reads GQVYKGKIVK…GRVKLSLVAR (69 aa).

It belongs to the polyribonucleotide nucleotidyltransferase family. In terms of assembly, component of the RNA degradosome, which is a multiprotein complex involved in RNA processing and mRNA degradation. It depends on Mg(2+) as a cofactor.

Its subcellular location is the cytoplasm. It catalyses the reaction RNA(n+1) + phosphate = RNA(n) + a ribonucleoside 5'-diphosphate. Its function is as follows. Involved in mRNA degradation. Catalyzes the phosphorolysis of single-stranded polyribonucleotides processively in the 3'- to 5'-direction. In Francisella tularensis subsp. mediasiatica (strain FSC147), this protein is Polyribonucleotide nucleotidyltransferase.